The sequence spans 226 residues: 7-cyano-7-deazaguanine synthase (226 aa).

10 to 20 (FSGGQDSTTLA) contacts ATP. Zn(2+) is bound by residues cysteine 190, cysteine 205, cysteine 208, and cysteine 211.

The protein belongs to the QueC family. Requires Zn(2+) as cofactor.

It carries out the reaction 7-carboxy-7-deazaguanine + NH4(+) + ATP = 7-cyano-7-deazaguanine + ADP + phosphate + H2O + H(+). It functions in the pathway purine metabolism; 7-cyano-7-deazaguanine biosynthesis. Functionally, catalyzes the ATP-dependent conversion of 7-carboxy-7-deazaguanine (CDG) to 7-cyano-7-deazaguanine (preQ(0)). The protein is 7-cyano-7-deazaguanine synthase of Helicobacter pylori (strain Shi470).